A 333-amino-acid chain; its full sequence is MDGLRTDGGAAGAAPASSSSSSSVAAAAPGQCRGFLSAPVFAGTHSGRAAAAAAAAAAAAAAASGFAYPGTSERAGSASSSSSSAVVAARPEAPSAKECPAPGTAATAPPGAPALGYGYHFGNGYYSCRMSHGVGLQQNALKSSPHSSLGGFPVEKYMDVSGLASSSVPANEVPARAKEVSFYQGYTSPYQHVPGYIDMVSTFGSGEPRHEAYISMEGYQSWTLANGWNSQVYCAKDQPQGSHFWKSSFPGDVALNQPDMCVYRRGRKKRVPYTKLQLKELENEYAINKFINKDKRRRISAATNLSERQVTIWFQNRRVKDKKIVSKLKDTVS.

Positions 1–24 (MDGLRTDGGAAGAAPASSSSSSSV) are disordered. The span at 12 to 24 (GAAPASSSSSSSV) shows a compositional bias: low complexity. Residues 266-325 (GRKKRVPYTKLQLKELENEYAINKFINKDKRRRISAATNLSERQVTIWFQNRRVKDKKIV) constitute a DNA-binding region (homeobox).

This sequence belongs to the Abd-B homeobox family.

It is found in the nucleus. Functionally, sequence-specific transcription factor that binds gene promoters and activates their transcription. Part of a developmental regulatory system that provides cells with specific positional identities on the anterior-posterior axis. The protein is Homeobox protein Hox-D13 (HOXD13) of Carollia perspicillata (Seba's short-tailed bat).